We begin with the raw amino-acid sequence, 356 residues long: Glycerol-1-phosphate dehydrogenase [NAD(P)+] (356 aa).

Residues 103 to 107 (GRSID) and 125 to 128 (TAAS) each bind NAD(+). Asp-130 is a substrate binding site. Position 134 (Ser-134) interacts with NAD(+). Asp-177 contributes to the substrate binding site. Residues Asp-177 and His-257 each coordinate Zn(2+). His-261 is a substrate binding site. Zn(2+) is bound at residue His-273.

The protein belongs to the glycerol-1-phosphate dehydrogenase family. The cofactor is Zn(2+).

The protein resides in the cytoplasm. It carries out the reaction sn-glycerol 1-phosphate + NAD(+) = dihydroxyacetone phosphate + NADH + H(+). It catalyses the reaction sn-glycerol 1-phosphate + NADP(+) = dihydroxyacetone phosphate + NADPH + H(+). It participates in membrane lipid metabolism; glycerophospholipid metabolism. Catalyzes the NAD(P)H-dependent reduction of dihydroxyacetonephosphate (DHAP or glycerone phosphate) to glycerol 1-phosphate (G1P). The G1P thus generated is used as the glycerophosphate backbone of phospholipids in the cellular membranes of Archaea. This is Glycerol-1-phosphate dehydrogenase [NAD(P)+] from Methanosarcina mazei (strain ATCC BAA-159 / DSM 3647 / Goe1 / Go1 / JCM 11833 / OCM 88) (Methanosarcina frisia).